The chain runs to 152 residues: MTTKKFRMEDVGLSKLKVEKNPKDVKQTEWKSVLPNEVYRVARESGTETPHTGGFNDHFEKGRYVCLCCGSELFNSDAKFWAGCGWPAFSESVGQDANIVRIVDRSHGMHRTEVRCKTCDAHLGHVFNDGPKETTGERYCINSVCMAFEKKD.

One can recognise a MsrB domain in the interval 27-151; the sequence is QTEWKSVLPN…NSVCMAFEKK (125 aa). Residues C66, C69, C116, and C119 each coordinate Zn(2+). Residue C140 is the Nucleophile of the active site.

It belongs to the MsrB Met sulfoxide reductase family. Zn(2+) is required as a cofactor.

It catalyses the reaction L-methionyl-[protein] + [thioredoxin]-disulfide + H2O = L-methionyl-(R)-S-oxide-[protein] + [thioredoxin]-dithiol. In terms of biological role, methionine-sulfoxide reductase that specifically reduces methionine (R)-sulfoxide back to methionine. While in many cases, methionine oxidation is the result of random oxidation following oxidative stress, methionine oxidation is also a post-translational modification that takes place on specific residue. This is Probable methionine-R-sulfoxide reductase B from Caenorhabditis elegans.